Consider the following 419-residue polypeptide: D-amino acid dehydrogenase (419 aa).

3 to 17 contributes to the FAD binding site; it reads VLILGSGVVGVTSAY.

This sequence belongs to the DadA oxidoreductase family. FAD is required as a cofactor.

It catalyses the reaction a D-alpha-amino acid + A + H2O = a 2-oxocarboxylate + AH2 + NH4(+). Its pathway is amino-acid degradation; D-alanine degradation; NH(3) and pyruvate from D-alanine: step 1/1. Oxidative deamination of D-amino acids. The polypeptide is D-amino acid dehydrogenase (Chromohalobacter salexigens (strain ATCC BAA-138 / DSM 3043 / CIP 106854 / NCIMB 13768 / 1H11)).